The sequence spans 589 residues: Aspartate--tRNA(Asp/Asn) ligase (589 aa).

Residue glutamate 172 coordinates L-aspartate. The segment at glutamine 196 to lysine 199 is aspartate. Arginine 218 serves as a coordination point for L-aspartate. Residues arginine 218 to glutamate 220 and glutamine 227 each bind ATP. L-aspartate is bound at residue histidine 449. Glutamate 483 serves as a coordination point for ATP. L-aspartate is bound at residue arginine 490. An ATP-binding site is contributed by glycine 535–arginine 538.

Belongs to the class-II aminoacyl-tRNA synthetase family. Type 1 subfamily. Homodimer.

Its subcellular location is the cytoplasm. The enzyme catalyses tRNA(Asx) + L-aspartate + ATP = L-aspartyl-tRNA(Asx) + AMP + diphosphate. Aspartyl-tRNA synthetase with relaxed tRNA specificity since it is able to aspartylate not only its cognate tRNA(Asp) but also tRNA(Asn). Reaction proceeds in two steps: L-aspartate is first activated by ATP to form Asp-AMP and then transferred to the acceptor end of tRNA(Asp/Asn). The chain is Aspartate--tRNA(Asp/Asn) ligase from Francisella philomiragia subsp. philomiragia (strain ATCC 25017 / CCUG 19701 / FSC 153 / O#319-036).